The following is an 870-amino-acid chain: Dynamin-2 (870 aa).

Residues 28–294 (HLDLPQIAVV…LTNHIRESLP (267 aa)) enclose the Dynamin-type G domain. Residues 38–45 (GGQSAGKS) are G1 motif. Residues Ser41, Gly43, Lys44, Ser45, Ser46, Arg59, and Gly60 each coordinate GDP. The segment at 64 to 66 (VTR) is G2 motif. A G3 motif region spans residues 136–139 (DLPG). The interval 205–208 (TKLD) is G4 motif. Residues Lys206, Asp208, and Asp211 each coordinate GDP. Tyr231 carries the post-translational modification Phosphotyrosine. The interval 235-238 (VNRS) is G5 motif. Residues Asn236, Arg237, and Gln239 each coordinate GDP. N6-acetyllysine is present on Lys299. The PH domain maps to 519 to 625 (LVIRRGWLTI…WKASFLRAGV (107 aa)). Residue Tyr597 is modified to Phosphotyrosine. Lys598 bears the N6-acetyllysine mark. Positions 653–744 (VETIRNLVDS…IIGDISTSTV (92 aa)) constitute a GED domain. The disordered stretch occupies residues 741-870 (TSTVSTPVPP…IRPAEPSLLD (130 aa)). The residue at position 755 (Thr755) is a Phosphothreonine. The span at 756-767 (WLQNTSSHSPTP) shows a compositional bias: polar residues. Position 764 is a phosphoserine; by CDK1 (Ser764). Pro residues predominate over residues 826-846 (SAPPQIPSRPARIPPGIPPGV). Positions 847–864 (PSRRAPAAPSRPTIIRPA) are enriched in low complexity.

Belongs to the TRAFAC class dynamin-like GTPase superfamily. Dynamin/Fzo/YdjA family. As to quaternary structure, oligomerizes into a helical polymer that self-assembles around the vesicle membrane, when associated to the menbrane through lipid binding. Interacts with SHANK1 and SHANK2. Interacts with SNX9. Interacts (via C-terminal proline-rich domain (PRD)) with SNX18 (via SH3 domain); this interaction regulates ATG9A and ATG16L1 trafficking from recycling endosomes to sites of autophagosome formation. Interacts with SNX33 (via SH3 domain). Interacts with PSTPIP1 (via SH3 domain). Interacts with CTNND2. Interacts (via C-terminal proline-rich domain (PRD)) with BIN1 (via SH3 domain); this interaction allows the recruitment of DNM2 to the membrane tubules and inhibits self-assembly-stimulated GTPase activity on the membrane. Interacts with GABARAP, GABARAPL1 and GABARAPL2. Interacts with MAP1LC3B (the lipidate and non-lipidated LC3 form); this interaction mediates recycling endosome scission leading to autophagosome release. Interacts with ITSN1. Interacts with MYOF. May interact with PIK3C3. May be a component of a complex composed of RAB5A (in GDP-bound form), DYN2 and PIK3C3. Interacts with SDC4; this interaction is markedly enhanced at focal ahesion site upon induction of focal adhesions and stress-fiber formation. Interacts with ACTN1. Interacts with CTTN; this interaction stimulates the intrinsic GTPase activity of DNM2 and stabilizes the association of DNM2 and actin filaments; in addition this interaction is stimulated by ligand binding to the receptor, leading to the recruitment of the DNM2-CTTN complex to the sequestered receptor-ligand complex to its internalization. Interacts with NOSTRIN (via SH3 domain); this interaction allows the recruitment of NOS3 to dynamin-positive structures. Interacts (via C-terminal proline-rich domain (PRD)) with SH3BP4 (via SH3 domain); this interaction controls the GTPase activity and is prevented by EGFR-induced tyrosine phosphorylation of either DNM2 or SH3BP4. Interacts with MYO1E (via SH3 domain). Interacts with TUBG1; this interaction may participate in centrosome cohesion. Post-translationally, phosphorylation at Ser-848 by GSK3-alpha relieves the inhibition of BIN1 and promotes endocytosis. Phosphorylation at Ser-764 by CDK1 is greatly increased upon mitotic entry. It regulates cytokinesis downstream of calcineurin, and does not affect clathrin-mediated endocytosis. Dephosphorylated by calcineurin/PP2 during cytokinesis in a Ca(2+)- and calmodulin-dependent manner. Phosphorylated on tyrosine residues by EGFR. Phosphorylated on tyrosine residues after activation of SRC. In terms of tissue distribution, ubiquitously expressed. Brain expression is restricted to glial cells and fibroblasts. Highest levels in the testis.

The protein resides in the cytoplasm. It is found in the cytoskeleton. It localises to the cytoplasmic vesicle. Its subcellular location is the clathrin-coated vesicle. The protein localises to the cell projection. The protein resides in the uropodium. It is found in the endosome. It localises to the microtubule organizing center. Its subcellular location is the centrosome. The protein localises to the centriole. The protein resides in the recycling endosome. It is found in the phagocytic cup. It localises to the phagosome membrane. Its subcellular location is the podosome. The protein localises to the cell junction. The protein resides in the postsynaptic density. It is found in the synapse. It localises to the synaptosome. Its subcellular location is the midbody. The protein localises to the membrane. The protein resides in the clathrin-coated pit. It is found in the cell membrane. The catalysed reaction is GTP + H2O = GDP + phosphate + H(+). In terms of biological role, catalyzes the hydrolysis of GTP and utilizes this energy to mediate vesicle scission at plasma membrane during endocytosis and filament remodeling at many actin structures during organization of the actin cytoskeleton. Plays an important role in vesicular trafficking processes, namely clathrin-mediated endocytosis (CME), exocytic and clathrin-coated vesicle from the trans-Golgi network, and PDGF stimulated macropinocytosis. During vesicular trafficking process, associates to the membrane, through lipid binding, and self-assembles into ring-like structure through oligomerization to form a helical polymer around the vesicle membrane and leading to vesicle scission. Plays a role in organization of the actin cytoskeleton by mediating arrangement of stress fibers and actin bundles in podocytes. During organization of the actin cytoskeleton, self-assembles into ring-like structure that directly bundles actin filaments to form typical membrane tubules decorated with dynamin spiral polymers. Self-assembly increases GTPase activity and the GTP hydrolysis causes the rapid depolymerization of dynamin spiral polymers, and results in dispersion of actin bundles. Remodels, through its interaction with CTTN, bundled actin filaments in a GTPase-dependent manner and plays a role in orchestrating the global actomyosin cytoskeleton. The interaction with CTTN stabilizes the interaction of DNM2 and actin filaments and stimulates the intrinsic GTPase activity that results in actin filament-barbed ends and increases the sensitivity of filaments in bundles to the actin depolymerizing factor, CFL1. Plays a role in the autophagy process, by participating in the formation of ATG9A vesicles destined for the autophagosomes through its interaction with SNX18, by mediating recycling endosome scission leading to autophagosome release through MAP1LC3B interaction and by regulating maturation of apoptotic cell corpse-containing phagosomes by recruiting PIK3C3 to the phagosome membrane. Also plays a role in cytokinesis. May participate in centrosome cohesion through its interaction with TUBG1. Plays a role in the regulation of neuron morphology, axon growth and formation of neuronal growth cones. Involved in membrane tubulation. The protein is Dynamin-2 of Rattus norvegicus (Rat).